The following is a 413-amino-acid chain: Histidine--tRNA ligase (413 aa).

This sequence belongs to the class-II aminoacyl-tRNA synthetase family. Homodimer.

It localises to the cytoplasm. It catalyses the reaction tRNA(His) + L-histidine + ATP = L-histidyl-tRNA(His) + AMP + diphosphate + H(+). This Wolbachia sp. subsp. Brugia malayi (strain TRS) protein is Histidine--tRNA ligase.